We begin with the raw amino-acid sequence, 143 residues long: Large ribosomal subunit protein uL11 (143 aa).

Belongs to the universal ribosomal protein uL11 family. As to quaternary structure, part of the ribosomal stalk of the 50S ribosomal subunit. Interacts with L10 and the large rRNA to form the base of the stalk. L10 forms an elongated spine to which L12 dimers bind in a sequential fashion forming a multimeric L10(L12)X complex. Post-translationally, one or more lysine residues are methylated.

Its function is as follows. Forms part of the ribosomal stalk which helps the ribosome interact with GTP-bound translation factors. The polypeptide is Large ribosomal subunit protein uL11 (Clavibacter michiganensis subsp. michiganensis (strain NCPPB 382)).